Consider the following 90-residue polypeptide: Co-chaperonin GroES (90 aa).

This sequence belongs to the GroES chaperonin family. Heptamer of 7 subunits arranged in a ring. Interacts with the chaperonin GroEL.

It localises to the cytoplasm. Its function is as follows. Together with the chaperonin GroEL, plays an essential role in assisting protein folding. The GroEL-GroES system forms a nano-cage that allows encapsulation of the non-native substrate proteins and provides a physical environment optimized to promote and accelerate protein folding. GroES binds to the apical surface of the GroEL ring, thereby capping the opening of the GroEL channel. This Borreliella burgdorferi (strain ATCC 35210 / DSM 4680 / CIP 102532 / B31) (Borrelia burgdorferi) protein is Co-chaperonin GroES.